The sequence spans 380 residues: Succinyl-diaminopimelate desuccinylase (380 aa).

Zn(2+) is bound at residue histidine 70. Aspartate 72 is a catalytic residue. Aspartate 104 is a Zn(2+) binding site. The active-site Proton acceptor is the glutamate 138. Residues glutamate 139, glutamate 167, and histidine 353 each coordinate Zn(2+).

The protein belongs to the peptidase M20A family. DapE subfamily. In terms of assembly, homodimer. The cofactor is Zn(2+). It depends on Co(2+) as a cofactor.

It carries out the reaction N-succinyl-(2S,6S)-2,6-diaminopimelate + H2O = (2S,6S)-2,6-diaminopimelate + succinate. The protein operates within amino-acid biosynthesis; L-lysine biosynthesis via DAP pathway; LL-2,6-diaminopimelate from (S)-tetrahydrodipicolinate (succinylase route): step 3/3. Catalyzes the hydrolysis of N-succinyl-L,L-diaminopimelic acid (SDAP), forming succinate and LL-2,6-diaminopimelate (DAP), an intermediate involved in the bacterial biosynthesis of lysine and meso-diaminopimelic acid, an essential component of bacterial cell walls. The polypeptide is Succinyl-diaminopimelate desuccinylase (Ectopseudomonas mendocina (strain ymp) (Pseudomonas mendocina)).